A 302-amino-acid chain; its full sequence is Putative glycine N-acyltransferase-like protein 1B (302 aa).

This sequence belongs to the glycine N-acyltransferase family.

It carries out the reaction an acyl-CoA + L-glutamine = an N(2)-acyl-L-glutamine + CoA + H(+). In terms of biological role, putative acyltransferase which transfers an acyl group to the N-terminus of glutamine. Can use phenylacetyl-CoA as an acyl donor. The polypeptide is Putative glycine N-acyltransferase-like protein 1B (Homo sapiens (Human)).